The sequence spans 361 residues: Phosphoserine aminotransferase (361 aa).

Residue R42 coordinates L-glutamate. Pyridoxal 5'-phosphate is bound by residues 76–77 (AR), W102, T153, D173, and Q196. The residue at position 197 (K197) is an N6-(pyridoxal phosphate)lysine. 238–239 (NT) is a pyridoxal 5'-phosphate binding site.

Belongs to the class-V pyridoxal-phosphate-dependent aminotransferase family. SerC subfamily. In terms of assembly, homodimer. It depends on pyridoxal 5'-phosphate as a cofactor.

It is found in the cytoplasm. The catalysed reaction is O-phospho-L-serine + 2-oxoglutarate = 3-phosphooxypyruvate + L-glutamate. The enzyme catalyses 4-(phosphooxy)-L-threonine + 2-oxoglutarate = (R)-3-hydroxy-2-oxo-4-phosphooxybutanoate + L-glutamate. Its pathway is amino-acid biosynthesis; L-serine biosynthesis; L-serine from 3-phospho-D-glycerate: step 2/3. It participates in cofactor biosynthesis; pyridoxine 5'-phosphate biosynthesis; pyridoxine 5'-phosphate from D-erythrose 4-phosphate: step 3/5. Its function is as follows. Catalyzes the reversible conversion of 3-phosphohydroxypyruvate to phosphoserine and of 3-hydroxy-2-oxo-4-phosphonooxybutanoate to phosphohydroxythreonine. The protein is Phosphoserine aminotransferase of Yersinia enterocolitica serotype O:8 / biotype 1B (strain NCTC 13174 / 8081).